The primary structure comprises 250 residues: 3-deoxy-manno-octulosonate cytidylyltransferase (250 aa).

It belongs to the KdsB family.

It localises to the cytoplasm. The catalysed reaction is 3-deoxy-alpha-D-manno-oct-2-ulosonate + CTP = CMP-3-deoxy-beta-D-manno-octulosonate + diphosphate. It functions in the pathway nucleotide-sugar biosynthesis; CMP-3-deoxy-D-manno-octulosonate biosynthesis; CMP-3-deoxy-D-manno-octulosonate from 3-deoxy-D-manno-octulosonate and CTP: step 1/1. It participates in bacterial outer membrane biogenesis; lipopolysaccharide biosynthesis. Activates KDO (a required 8-carbon sugar) for incorporation into bacterial lipopolysaccharide in Gram-negative bacteria. The polypeptide is 3-deoxy-manno-octulosonate cytidylyltransferase (Sinorhizobium medicae (strain WSM419) (Ensifer medicae)).